The sequence spans 421 residues: MTKSIQAIRGMSDTLPEEIPYWSFLENACRSVVSAYHYREIRFPVVEQTALFKRTIGEATDIVEKEMYTFTDRNGDSLTLRPEGTAGCVRAGIQNGLLYNQIQRLWYLGPMFRHERPQKGRYRQFYQLGVETYGMAGAPIEAELIFMCLRLWKALGLESCIHLELNTLGTLDSRNAYRQALVTYLQSREKELDEDSRRRLHTNPLRILDSKNPDLQPLLAEAPKLIDYLDETSRRHFDQLRSLLDQAEVPFIVNPTLVRGLDYYTHTVFEWVTDQLGAQGTVCAGGRYDNLVELLGGKSTPAAGFAAGLERLVLLLRGVQECLDKIDIYVVIAGEAVIQEGLLMTEQLRNVLPEWVIEADLSGSSLKSQFKRADKSGAKWALVIAEEEIKTNTVTLKHLRETVPQKSLTRDTLIPYLKSEG.

It belongs to the class-II aminoacyl-tRNA synthetase family. In terms of assembly, homodimer.

The protein resides in the cytoplasm. The enzyme catalyses tRNA(His) + L-histidine + ATP = L-histidyl-tRNA(His) + AMP + diphosphate + H(+). The polypeptide is Histidine--tRNA ligase (Coxiella burnetii (strain CbuK_Q154) (Coxiella burnetii (strain Q154))).